Reading from the N-terminus, the 2414-residue chain is Centrosome-associated protein CEP250 (2414 aa).

2 coiled-coil regions span residues Glu91–Arg153 and Leu248–Glu357. 7 disordered regions span residues Glu356 to Asp384, Ala672 to Ala707, Ser1191 to Gln1212, Glu1269 to Leu1303, Ala2050 to Gln2071, Ala2194 to Leu2238, and Arg2275 to Asp2317. The span at Gln371 to Asp381 shows a compositional bias: polar residues. The stretch at Gln400 to Gln1165 forms a coiled coil. Over residues Arg684–Gln704 the composition is skewed to basic and acidic residues. Coiled coils occupy residues Leu1237–Ser2200 and Gly2231–Ala2290. Over residues Gln1280–Ser1289 the composition is skewed to low complexity. Polar residues predominate over residues Glu2196–Ala2209. Basic and acidic residues predominate over residues Arg2275 to Arg2286. Phosphoserine is present on Ser2292. Over residues Gln2305–Asp2317 the composition is skewed to low complexity. The stretch at Leu2320–Tyr2345 forms a coiled coil. Ser2389 and Ser2393 each carry phosphoserine; by NEK2. The tract at residues Leu2390–Arg2414 is disordered.

In terms of assembly, monomer and homodimer. Forms a complex in vitro with both NEK2 kinase and the PPP1CC catalytic subunit of protein phosphatase 1 (PP1). Interacts with CEP135. Interacts with CROCC/rootletin. Interacts with CNTLN. Interacts with NIN (via C-terminus). Post-translationally, differentially phosphorylated during cell cycle. Phosphorylation may regulate association/dissociation from centrosome. During M phase of mitosis, C-terminal part is phosphorylated by NEK2, suggesting that it may trigger the dissociation from the mitotic centrosome. Dephosphorylated in vitro by the PP1 phosphatase. As to expression, expressed in the retina.

Its subcellular location is the cytoplasm. It is found in the perinuclear region. The protein localises to the cytoskeleton. It localises to the microtubule organizing center. The protein resides in the centrosome. Its subcellular location is the centriole. It is found in the cilium basal body. The protein localises to the cell projection. It localises to the cilium. The protein resides in the photoreceptor outer segment. Its subcellular location is the photoreceptor inner segment. In terms of biological role, plays an important role in centrosome cohesion during interphase. Recruits CCDC102B to the proximal ends of centrioles. Maintains centrosome cohesion by forming intercentriolar linkages. Accumulates at the proximal end of each centriole, forming supramolecular assemblies with viscous material properties that promote organelle cohesion. May be involved in ciliogenesis. The chain is Centrosome-associated protein CEP250 (Cep250) from Mus musculus (Mouse).